Here is a 550-residue protein sequence, read N- to C-terminus: Hydroxylamine reductase (550 aa).

[4Fe-4S] cluster-binding residues include cysteine 5, cysteine 8, cysteine 17, and cysteine 23. Residues histidine 250, glutamate 274, cysteine 319, cysteine 405, cysteine 433, cysteine 458, glutamate 492, and lysine 494 each coordinate hybrid [4Fe-2O-2S] cluster. Cysteine 405 bears the Cysteine persulfide mark.

Belongs to the HCP family. It depends on [4Fe-4S] cluster as a cofactor. Hybrid [4Fe-2O-2S] cluster is required as a cofactor.

Its subcellular location is the cytoplasm. The enzyme catalyses A + NH4(+) + H2O = hydroxylamine + AH2 + H(+). Catalyzes the reduction of hydroxylamine to form NH(3) and H(2)O. The polypeptide is Hydroxylamine reductase (Geobacter sulfurreducens (strain ATCC 51573 / DSM 12127 / PCA)).